We begin with the raw amino-acid sequence, 397 residues long: Elongation factor Tu (397 aa).

The tr-type G domain maps to 10–206; the sequence is KPHVNIGTIG…AVDTYIPTPE (197 aa). The G1 stretch occupies residues 19–26; the sequence is GHVDHGKT. 19–26 serves as a coordination point for GTP; the sequence is GHVDHGKT. Threonine 26 provides a ligand contact to Mg(2+). Positions 60–64 are G2; the sequence is GITIN. The tract at residues 81 to 84 is G3; sequence DCPG. GTP contacts are provided by residues 81-85 and 136-139; these read DCPGH and NKSD. A G4 region spans residues 136 to 139; it reads NKSD. The tract at residues 174–176 is G5; the sequence is SAL.

The protein belongs to the TRAFAC class translation factor GTPase superfamily. Classic translation factor GTPase family. EF-Tu/EF-1A subfamily. In terms of assembly, monomer.

The protein localises to the cytoplasm. It carries out the reaction GTP + H2O = GDP + phosphate + H(+). In terms of biological role, GTP hydrolase that promotes the GTP-dependent binding of aminoacyl-tRNA to the A-site of ribosomes during protein biosynthesis. The protein is Elongation factor Tu of Clostridium kluyveri (strain ATCC 8527 / DSM 555 / NBRC 12016 / NCIMB 10680 / K1).